The sequence spans 264 residues: Short chain dehydrogenase/reductase AacuN (264 aa).

Positions 24, 70, 97, and 130 each coordinate NADP(+). Catalysis depends on proton donor residues serine 146, serine 147, and tyrosine 161. The NADP(+) site is built by tyrosine 161, lysine 165, and threonine 196. The active-site Lowers pKa of active site Tyr is lysine 165.

This sequence belongs to the short-chain dehydrogenases/reductases (SDR) family.

It carries out the reaction 3,8,9,10-tetrahydroxy-6-methyl-1,4-dihydroanthracen-1-one + NADPH + H(+) = (3R)-3,8,9,10-tetrahydroxy-6-methyl-1,2,3,4-tetrahydroanthracen-1-one + NADP(+). The protein operates within secondary metabolite biosynthesis. Its function is as follows. Atrochrysone carboxylic acid synthase; part of the gene cluster that mediates the biosynthesis of the tetrahydroxanthone dimer secalonic acid D. The pathway begins with the synthesis of atrochrysone thioester by the polyketide synthase AacuL. The atrochrysone carboxyl ACP thioesterase AacuM then breaks the thioester bond and releases the atrochrysone carboxylic acid from AacuL. Atrochrysone carboxylic acid is decarboxylated by the decarboxylase AacuI, and oxidized by the anthrone oxygenase AacuG to yield emodin. Emodin is then reduced to emodin hydroquinone by a yet unidentified oxidoreductase. A-ring reduction by the short chain dehydrogenase AacuN, dehydration by the scytalone dehydratase-like protein AacuK and probable spontaneous re-oxidation, results in overall deoxygenation to chrysophanol. Baeyer-Villiger oxidation by the Baeyer-Villiger monooxygenase (BVMO) AacuH then yields monodictyphenone. Monodictyphenone is transformed into compounds with the tetrahydroxanthone skeleton via methylesterification by the methyltransferase AacuQ, followed by the action of the flavin-dependent monooxygenase AacuC, the isomerase AacuP, and the short chain dehydrogenase/reductase AacuF or AacuD. AacuF and AacuD should accept the same compound as a substrate but perform the ketoreduction with a different stereoselectivity, thus yielding blennolides B and A, respectively. In the final step of the biosynthesis, the cytochrome P450 monooxygenase AacuE accepts blennolide B and/or blennolide A to conduct the dimerization reaction to furnish the tetrahydroxanthone dimers, secalonic acids D, B, and F. In Aspergillus aculeatus (strain ATCC 16872 / CBS 172.66 / WB 5094), this protein is Short chain dehydrogenase/reductase AacuN.